Reading from the N-terminus, the 26-residue chain is Acyl carrier protein (26 aa).

The Carrier domain maps to 2 to 26; sequence SDIEQRIKQAVAEQLGMRAEEIKNE.

The protein belongs to the acyl carrier protein (ACP) family. 4'-phosphopantetheine is transferred from CoA to a specific serine of apo-ACP by AcpS. This modification is essential for activity because fatty acids are bound in thioester linkage to the sulfhydryl of the prosthetic group.

The protein localises to the cytoplasm. It functions in the pathway lipid metabolism; fatty acid biosynthesis. Functionally, carrier of the growing fatty acid chain in fatty acid biosynthesis. The chain is Acyl carrier protein (acpP) from Acinetobacter calcoaceticus.